Reading from the N-terminus, the 1149-residue chain is Protein deacetylase HDAC6 (1149 aa).

The interval 1–61 (MTSTGQDSST…KGKMKKLSQP (61 aa)) is disordered. A compositionally biased stretch (polar residues) spans 18–29 (NPQSPLQESSAT). Residue Ser21 is modified to Phosphoserine. At Arg32 the chain carries Omega-N-methylarginine. Phosphoserine is present on Ser43. Residues 66-75 (LVVGLQGLDL) carry the Nuclear export signal motif. Histone deacetylase stretches follow at residues 87-403 (LVFD…TLLG) and 481-799 (GLVY…SLLG). His215 serves as the catalytic 1. The 2 role is filled by His610. The disordered stretch occupies residues 954–975 (ALGETEPTPPASHTNKQTTGAS). Phosphothreonine occurs at positions 958, 961, 967, and 971. Polar residues predominate over residues 964 to 975 (ASHTNKQTTGAS). A Phosphoserine modification is found at Ser975. The segment at 1045-1143 (SWCPHLMAVC…NAAHQNKFGE (99 aa)) adopts a UBP-type zinc-finger fold. Residues Cys1047, His1049, Cys1067, Cys1070, Cys1079, Cys1082, and Cys1087 each contribute to the Zn(2+) site. The segment at 1088–1090 (SRY) is ubiquitin binding. Positions 1094, 1098, 1104, 1117, and 1120 each coordinate Zn(2+). The segment at 1116 to 1123 (WCYVCQAY) is ubiquitin binding. Ser1148 carries the post-translational modification Phosphoserine.

The protein belongs to the histone deacetylase family. HD type 2 subfamily. In terms of assembly, forms a trimeric complex in the nucleus consisting of BANP, HDAC6 and KHDRBS1/SAM68; HDAC6 keeps KHDRBS1 in a deacetylated state which inhibits the inclusion of CD44 alternate exons. The complex is disrupted by MAPK1/MAPK3-mediated phosphorylation of BANP which results in BANP export to the cytoplasm. This facilitates acetylation of KHDRBS1 and CD44 variant exon inclusion. Interacts with SIRT2 (via both phosphorylated, unphosphorylated, active or inactive forms); the interaction is necessary for the complex to interact with alpha-tubulin. Under proteasome impairment conditions, interacts with UBD via its histone deacetylase 1 and UBP-type zinc-finger regions. Interacts with BBIP1, CBFA2T3, CYLD, DDIT3/CHOP, ZMYND15, F-actin and HDAC11. Interacts with RIPOR2; this interaction occurs during early myogenic differentiation and prevents HDAC6 to deacetylate tubulin. Interacts with AURKA; AURKA-mediated phosphorylation of HDAC6 promotes deacetylation of alpha-tubulin. Interacts with DYSF; this interaction occurs during early myogenic differentiation. Interacts with TPPP; inhibiting the tubulin deacetylase activity of HDAC6. Interacts with DYNLL1. Interacts with ATP13A2; the interaction results in recruitment of HDAC6 to lysosomes to promote CTTN deacetylation. Interacts with CCDC141 (via the N-terminal region); inhibiting the deacetylase activity of HDAC6. Interacts with IPO7; the interaction facilitates HDAC6 nuclear translocation in dental papilla cells. Requires Zn(2+) as cofactor. Post-translationally, phosphorylated by AURKA; phosphorylation increases HDAC6-mediated deacetylation of alpha-tubulin and subsequent disassembly of cilia. Ubiquitinated. Its polyubiquitination however does not lead to its degradation. In terms of processing, sumoylated in vitro. As to expression, expressed in neurons of the cortex. Expressed in Purkinje cells. Detected in keratinocytes (at protein level).

The protein localises to the cytoplasm. The protein resides in the cytoskeleton. It localises to the nucleus. It is found in the perikaryon. Its subcellular location is the cell projection. The protein localises to the dendrite. The protein resides in the axon. It localises to the cilium. It is found in the microtubule organizing center. Its subcellular location is the centrosome. The protein localises to the cilium basal body. The enzyme catalyses N(6)-acetyl-L-lysyl-[protein] + H2O = L-lysyl-[protein] + acetate. It carries out the reaction N(6)-acetyl-L-lysyl-[alpha-tubulin] + H2O = L-lysyl-[alpha-tubulin] + acetate. It participates in protein modification; protein ubiquitination. In terms of biological role, deacetylates a wide range of non-histone substrates. Plays a central role in microtubule-dependent cell motility by mediating deacetylation of tubulin. Required for cilia disassembly via deacetylation of alpha-tubulin. Alpha-tubulin deacetylation results in destabilization of dynamic microtubules. Promotes deacetylation of CTTN, leading to actin polymerization, promotion of autophagosome-lysosome fusion and completion of autophagy. Deacetylates SQSTM1. Deacetylates peroxiredoxins PRDX1 and PRDX2, decreasing their reducing activity. Deacetylates antiviral protein RIGI in the presence of viral mRNAs which is required for viral RNA detection by RIGI. Sequentially deacetylates and polyubiquitinates DNA mismatch repair protein MSH2 which leads to MSH2 degradation, reducing cellular sensitivity to DNA-damaging agents and decreasing cellular DNA mismatch repair activities. Deacetylates DNA mismatch repair protein MLH1 which prevents recruitment of the MutL alpha complex (formed by the MLH1-PMS2 heterodimer) to the MutS alpha complex (formed by the MSH2-MSH6 heterodimer), leading to tolerance of DNA damage. Deacetylates RHOT1/MIRO1 which blocks mitochondrial transport and mediates axon growth inhibition. Deacetylates transcription factor SP1 which leads to increased expression of ENG, positively regulating angiogenesis. Deacetylates KHDRBS1/SAM68 which regulates alternative splicing by inhibiting the inclusion of CD44 alternate exons. Promotes odontoblast differentiation following IPO7-mediated nuclear import and subsequent repression of RUNX2 expression. In addition to its protein deacetylase activity, plays a key role in the degradation of misfolded proteins: when misfolded proteins are too abundant to be degraded by the chaperone refolding system and the ubiquitin-proteasome, mediates the transport of misfolded proteins to a cytoplasmic juxtanuclear structure called aggresome. Probably acts as an adapter that recognizes polyubiquitinated misfolded proteins and target them to the aggresome, facilitating their clearance by autophagy. The protein is Protein deacetylase HDAC6 of Mus musculus (Mouse).